A 410-amino-acid chain; its full sequence is LL-diaminopimelate aminotransferase (410 aa).

Substrate contacts are provided by Tyr-15 and Gly-42. Pyridoxal 5'-phosphate-binding positions include Tyr-72, 108–109 (SK), Tyr-132, Asn-187, Tyr-218, and 246–248 (SFS). Substrate-binding residues include Lys-109, Tyr-132, and Asn-187. Residue Lys-249 is modified to N6-(pyridoxal phosphate)lysine. Pyridoxal 5'-phosphate contacts are provided by Arg-257 and Asn-292. Residues Asn-292 and Arg-388 each contribute to the substrate site.

The protein belongs to the class-I pyridoxal-phosphate-dependent aminotransferase family. LL-diaminopimelate aminotransferase subfamily. As to quaternary structure, homodimer. Pyridoxal 5'-phosphate is required as a cofactor.

The catalysed reaction is (2S,6S)-2,6-diaminopimelate + 2-oxoglutarate = (S)-2,3,4,5-tetrahydrodipicolinate + L-glutamate + H2O + H(+). Its pathway is amino-acid biosynthesis; L-lysine biosynthesis via DAP pathway; LL-2,6-diaminopimelate from (S)-tetrahydrodipicolinate (aminotransferase route): step 1/1. In terms of biological role, involved in the synthesis of meso-diaminopimelate (m-DAP or DL-DAP), required for both lysine and peptidoglycan biosynthesis. Catalyzes the direct conversion of tetrahydrodipicolinate to LL-diaminopimelate. The chain is LL-diaminopimelate aminotransferase from Syntrophotalea carbinolica (strain DSM 2380 / NBRC 103641 / GraBd1) (Pelobacter carbinolicus).